A 131-amino-acid chain; its full sequence is Small ribosomal subunit protein eS8 (131 aa).

The interval 1 to 37 (MKLGAFYKGGDLKKPSGGKKRRVRRTKKKALGGGPPQ) is disordered. Over residues 16-30 (SGGKKRRVRRTKKKA) the composition is skewed to basic residues.

This sequence belongs to the eukaryotic ribosomal protein eS8 family. As to quaternary structure, part of the 30S ribosomal subunit.

The chain is Small ribosomal subunit protein eS8 from Pyrobaculum neutrophilum (strain DSM 2338 / JCM 9278 / NBRC 100436 / V24Sta) (Thermoproteus neutrophilus).